Reading from the N-terminus, the 224-residue chain is 3-dehydroquinate dehydratase (224 aa).

Residues Glu30 to Arg32 and Arg62 each bind 3-dehydroquinate. Catalysis depends on His118, which acts as the Proton donor/acceptor. Lys143 acts as the Schiff-base intermediate with substrate in catalysis. Positions 186, 205, and 209 each coordinate 3-dehydroquinate.

The protein belongs to the type-I 3-dehydroquinase family. Homodimer.

The enzyme catalyses 3-dehydroquinate = 3-dehydroshikimate + H2O. It functions in the pathway metabolic intermediate biosynthesis; chorismate biosynthesis; chorismate from D-erythrose 4-phosphate and phosphoenolpyruvate: step 3/7. Its function is as follows. Involved in the third step of the chorismate pathway, which leads to the biosynthesis of aromatic amino acids. Catalyzes the cis-dehydration of 3-dehydroquinate (DHQ) and introduces the first double bond of the aromatic ring to yield 3-dehydroshikimate. This is 3-dehydroquinate dehydratase from Streptococcus suis (strain 98HAH33).